A 771-amino-acid polypeptide reads, in one-letter code: Endoplasmin homolog (771 aa).

The first 24 residues, 1 to 24 (MANSSLLRVVLVALLLLGSVTVSA), serve as a signal peptide directing secretion. Residues Asn-63, Asp-109, and Phe-160 each contribute to the ATP site. Asn-63 carries an N-linked (GlcNAc...) asparagine glycan. The interval 253–282 (TAATPEPAAEEGSLDEGAVEEDPDKEGDTQ) is disordered. Acidic residues predominate over residues 260 to 277 (AAEEGSLDEGAVEEDPDK). Residues Asn-306 and Asn-402 are each glycosylated (N-linked (GlcNAc...) asparagine). Residues 727–771 (ADDSLLPPDDAEYTVSDTEAEEEEEQPKVDANADEEAEAVGEDDL) form a disordered region. Residues 758 to 771 (NADEEAEAVGEDDL) show a composition bias toward acidic residues. A Prevents secretion from ER motif is present at residues 768 to 771 (EDDL).

The protein belongs to the heat shock protein 90 family. In terms of assembly, homotetramer.

The protein localises to the endoplasmic reticulum. Its function is as follows. Molecular chaperone that functions in the processing and transport of secreted proteins. Required for the synthesis of lipophosphoglycan (LPG), a cell surface glycoconjugate. Necessary for the attachment of the galactosyl residue to the mannose within the phosphoglycan repeats of the nascent LPG chain. Also required for addition of phosphoglycan to acid phosphatase. Not required for normal growth. Has ATPase activity. Binds heparin with micromolar affinity which may facilitate infection of host cells. The protein is Endoplasmin homolog of Leishmania infantum.